We begin with the raw amino-acid sequence, 361 residues long: Mitochondrial import receptor subunit TOM40 homolog (361 aa).

Low complexity predominate over residues 1 to 10 (MGNVLAASSP). A disordered region spans residues 1–71 (MGNVLAASSP…AASAGGTADD (71 aa)). Residues 11–36 (PAGPPPPPAPPLVGLPPPPPSPPGFT) show a composition bias toward pro residues. Positions 40–52 (LGGGLGAGAGTGR) are enriched in gly residues. Residues 59–71 (GTAAASAGGTADD) show a composition bias toward low complexity.

It belongs to the Tom40 family. As to quaternary structure, forms part of the preprotein translocase complex of the outer mitochondrial membrane (TOM complex) which consists of at least 7 different proteins (TOMM5, TOMM6, TOMM7, TOMM20, TOMM22, TOMM40 and TOMM70). Interacts with mitochondrial targeting sequences. Interacts with TIMM29; linking the TIM22 complex to the TOM complex. Forms a complex with BCAP31 (via C-terminus) which mediates the translocation of components of the mitochondrial membrane respiratory chain NADH dehydrogenase (Complex I) from the cytosol to the mitochondria. Interacts (via N-terminus) with CYP1A1 (via mitochondrial targeting signal); this interaction is required for CYP1A1 translocation across the mitochondrial outer membrane.

Its subcellular location is the mitochondrion outer membrane. In terms of biological role, channel-forming protein essential for import of protein precursors into mitochondria. Plays a role in the assembly of the mitochondrial membrane respiratory chain NADH dehydrogenase (Complex I) by forming a complex with BCAP31 and mediating the translocation of Complex I components from the cytosol to the mitochondria. In Bos taurus (Bovine), this protein is Mitochondrial import receptor subunit TOM40 homolog.